A 1355-amino-acid polypeptide reads, in one-letter code: Ecdysone-induced protein 75B, isoform A (1355 aa).

Disordered stretches follow at residues 60-91 (QHQPMHQLHHQHQHQHQHQQQAKSQQLKQQHS), 126-228 (RLKN…DSSY), 248-268 (ELEQQQTTGGSNAQQQVEAKP), and 308-344 (ATQQQQQQQQQHQHQQQRRDSSDSNCSLMSNSSNSSA). Basic residues predominate over residues 66–76 (QLHHQHQHQHQ). 2 stretches are compositionally biased toward low complexity: residues 77–91 (HQQQAKSQQLKQQHS) and 143–179 (TLVKTTTTSNSNSNNTQTTNSISQQQQQHQIVLQHQQ). A compositionally biased stretch (acidic residues) spans 200–213 (SGIDEDSPNSDEDC). 2 stretches are compositionally biased toward polar residues: residues 218-228 (PAGTSLEDSSY) and 254-264 (TTGGSNAQQQV). 2 stretches are compositionally biased toward low complexity: residues 308–321 (ATQQQQQQQQQHQH) and 330–344 (DSNCSLMSNSSNSSA). Positions 384–474 (SQLNYLCQKF…VGMSRDAVRF (91 aa)) form a DNA-binding region, nuclear receptor. An NR C4-type; degenerate zinc finger spans residues 387–421 (NYLCQKFDEKLDTALSNSSANTGRNTPAVTANEDA). The NR C4-type zinc finger occupies 438–457 (CTKNQQCSILRINRNRCQYC). The region spanning 508–756 (DQPRLLAAVL…QQMWSMEDGN (249 aa)) is the NR LBD domain. 6 disordered regions span residues 780–821 (KSPL…SALA), 927–964 (LDSPTDSGIESGNEKNECKAVSSGGSSSCSSPRSSVDD), 987–1007 (VSVSPVRSPQPSTSSHLKRQI), 1051–1117 (AEAD…SSHS), 1147–1260 (ENST…SNSA), and 1312–1344 (TVTASNGGPPSAAASPAPSSSPPASVGSPNPGL). 5 stretches are compositionally biased toward low complexity: residues 797 to 809 (GSPSSSQPQGVSL), 948 to 960 (SSGGSSSCSSPRS), 987 to 1001 (VSVSPVRSPQPSTSS), 1053 to 1098 (ADAS…AQSQ), and 1106 to 1117 (SSPKASMASSHS). 2 stretches are compositionally biased toward polar residues: residues 1149-1162 (STAASSTTNGVGNR) and 1174-1196 (AVQNQQRWGSSSVITTTCQQRQQ). 3 stretches are compositionally biased toward low complexity: residues 1197–1233 (SVSPHSNGSSSSSSSSSSSSSSSSSTSSNCSSSSASS), 1242–1260 (STSNGTSAPASSSSGSNSA), and 1315–1343 (ASNGGPPSAAASPAPSSSPPASVGSPNPG).

This sequence belongs to the nuclear hormone receptor family. NR1 subfamily.

It is found in the nucleus. Its function is as follows. Implicated in the regulation of ecdysone-triggered gene hierarchies. Probably plays a key role in mediating the regulation of the larval molt by 20-OH-ecdysone. This is Ecdysone-induced protein 75B, isoform A (Eip75B) from Drosophila melanogaster (Fruit fly).